The primary structure comprises 193 residues: NAD(P)H-quinone oxidoreductase subunit J (193 aa).

The segment at 1–21 is disordered; sequence MSDSAPTNPTPTNPAPEESAS.

The protein belongs to the complex I 30 kDa subunit family. NDH-1 can be composed of about 15 different subunits; different subcomplexes with different compositions have been identified which probably have different functions.

It localises to the cellular thylakoid membrane. It carries out the reaction a plastoquinone + NADH + (n+1) H(+)(in) = a plastoquinol + NAD(+) + n H(+)(out). It catalyses the reaction a plastoquinone + NADPH + (n+1) H(+)(in) = a plastoquinol + NADP(+) + n H(+)(out). In terms of biological role, NDH-1 shuttles electrons from an unknown electron donor, via FMN and iron-sulfur (Fe-S) centers, to quinones in the respiratory and/or the photosynthetic chain. The immediate electron acceptor for the enzyme in this species is believed to be plastoquinone. Couples the redox reaction to proton translocation, and thus conserves the redox energy in a proton gradient. Cyanobacterial NDH-1 also plays a role in inorganic carbon-concentration. The protein is NAD(P)H-quinone oxidoreductase subunit J of Synechococcus sp. (strain CC9902).